Reading from the N-terminus, the 37-residue chain is Large ribosomal subunit protein bL36 (37 aa).

The protein belongs to the bacterial ribosomal protein bL36 family.

The chain is Large ribosomal subunit protein bL36 from Tropheryma whipplei (strain Twist) (Whipple's bacillus).